We begin with the raw amino-acid sequence, 194 residues long: 3-isopropylmalate dehydratase small subunit (194 aa).

It belongs to the LeuD family. LeuD type 1 subfamily. In terms of assembly, heterodimer of LeuC and LeuD.

The enzyme catalyses (2R,3S)-3-isopropylmalate = (2S)-2-isopropylmalate. It participates in amino-acid biosynthesis; L-leucine biosynthesis; L-leucine from 3-methyl-2-oxobutanoate: step 2/4. Its function is as follows. Catalyzes the isomerization between 2-isopropylmalate and 3-isopropylmalate, via the formation of 2-isopropylmaleate. This chain is 3-isopropylmalate dehydratase small subunit, found in Bacillus cereus (strain ATCC 14579 / DSM 31 / CCUG 7414 / JCM 2152 / NBRC 15305 / NCIMB 9373 / NCTC 2599 / NRRL B-3711).